A 372-amino-acid polypeptide reads, in one-letter code: D-alanine--D-alanine ligase (372 aa).

The ATP-grasp domain occupies 145-349 (KTVLRAGGIP…CPNLLDQLIE (205 aa)). ATP is bound at residue 176-231 (DRWGTSELFVKAVSLGSSVATLPVKTETEFTKAVKEVFRYDDRLMVEPRIRGREIE). The Mg(2+) site is built by D303, E316, and N318.

The protein belongs to the D-alanine--D-alanine ligase family. Mg(2+) is required as a cofactor. The cofactor is Mn(2+).

The protein localises to the cytoplasm. It catalyses the reaction 2 D-alanine + ATP = D-alanyl-D-alanine + ADP + phosphate + H(+). The protein operates within cell wall biogenesis; peptidoglycan biosynthesis. Its function is as follows. Cell wall formation. The sequence is that of D-alanine--D-alanine ligase from Coxiella burnetii (strain RSA 331 / Henzerling II).